Reading from the N-terminus, the 481-residue chain is Tagaturonate/fructuronate epimerase (481 aa).

The active-site Proton acceptor is the Asp-161. His-162 contacts a divalent metal cation. Catalysis depends on Glu-266, which acts as the Proton donor. 2 residues coordinate a divalent metal cation: Lys-308 and His-341.

The protein belongs to the UxaE family. It depends on a divalent metal cation as a cofactor.

The catalysed reaction is keto-D-tagaturonate = keto-D-fructuronate. Functionally, catalyzes the epimerization of D-tagaturonate (D-TagA) to D-fructuronate (D-FruA). The sequence is that of Tagaturonate/fructuronate epimerase from Thermotoga maritima (strain ATCC 43589 / DSM 3109 / JCM 10099 / NBRC 100826 / MSB8).